A 147-amino-acid polypeptide reads, in one-letter code: Putative nickel-responsive regulator (147 aa).

Ni(2+) contacts are provided by His-76, His-87, His-89, and Cys-95.

It belongs to the transcriptional regulatory CopG/NikR family. Requires Ni(2+) as cofactor.

In terms of biological role, transcriptional regulator. This chain is Putative nickel-responsive regulator, found in Rhodopseudomonas palustris (strain TIE-1).